The sequence spans 275 residues: DNAEIEKILLEEHEKETHHRRGLRDKRQQSQEKNVIVKVSKKQIEELSKNAKSSSKKSVSSRSEPFNLKSSDPIYSNQYGKFFEITPKKNPQLQDLDIFVNYVEIKEGSLWLPHYNSRAIVIVTVNEGKGDFELVGQRNENQQGLREEDDEEEEQREEETKNQVQSYKAKLTPGDVFVIPAGHPVAVRASSNLNLLGFGINAENNQRNFLAGEEDNVISQIQKQVKDLTFPGSAQEVDRLLENQKQSYFANAQPQQRETRSQEIKEHLYSILGAF.

A compositionally biased stretch (basic and acidic residues) spans 1-17; sequence DNAEIEKILLEEHEKET. Disordered regions lie at residues 1-71 and 134-164; these read DNAE…LKSS and LVGQ…KNQV. Positions 50–63 are enriched in low complexity; that stretch reads NAKSSSKKSVSSRS. The 173-residue stretch at 66 to 238 folds into the Cupin type-1 domain; sequence FNLKSSDPIY…TFPGSAQEVD (173 aa). A compositionally biased stretch (acidic residues) spans 147-157; the sequence is EEDDEEEEQRE.

This sequence belongs to the 7S seed storage protein family.

It localises to the vacuole. It is found in the aleurone grain. Functionally, seed storage protein. This is Provicilin from Pisum sativum (Garden pea).